A 222-amino-acid chain; its full sequence is Vesicle transport v-SNARE 12 (222 aa).

Ser-2 is modified (N-acetylserine). Over 2–199 (SDVFEGYERQ…MSRRMTRNKW (198 aa)) the chain is Cytoplasmic. Residues 68 to 95 (KAVCLSKLREYKSDLNQLKKEFKRVSSA) are a coiled coil. Residues 200–220 (IITSVIVALVLAIILIISYKL) form a helical; Anchor for type IV membrane protein membrane-spanning segment. Residues 221-222 (SH) lie on the Vesicular side of the membrane.

This sequence belongs to the VTI1 family. Forms SNARE complexes with the t-SNAREs SYP61 and either SYP41 or SYP42, and with a much lower affinity with SYP51 in the TGN. Also interacts with VPS45, a Sec1 protein, but not with SYP21 or SYP22. Binds to EPSIN2. Core constituent of the SNARE complex required for membrane fusion at the trans-Golgi network. Interacts with SCYL2B. Expressed in roots, stems, flowers and leaves.

Its subcellular location is the golgi apparatus. The protein resides in the trans-Golgi network membrane. It is found in the prevacuolar compartment membrane. It localises to the cell membrane. Its function is as follows. Together with either SYP41 or SYP61, required for membrane fusion; the fusion of phospholipid vesicles containing SYP41 or SYP61 and VTI12 is triggered by YKT61 and YKT62. Functions as a v-SNARE responsible for the docking or fusion of transport vesicles within the trans-Golgi network (TGN) and mediates liposome fusion. Necessary to deliver proteins to the protein storage vacuole (PSV). May be also involved in retrograde traffic to the cis-Golgi. The protein is Vesicle transport v-SNARE 12 of Arabidopsis thaliana (Mouse-ear cress).